Here is a 565-residue protein sequence, read N- to C-terminus: MKDSREKLIKRFLCAKTNTKIVNQENKLYYFFLHEDLYPIIFQNTDSSFGKFSSVFRKTNIKKNHRESFLTIKSCIFLFRSNNFSGRKRSFFSNTRFHDQKKKENFLPLPKKVIFSLFFESITFILLCNQKKSDFEKQFFQTKDLSISIQKPLASLERQWQYDSFGFQGCFSYFFHPEVVLRILRKKFQDISFLHLLRKFLHLNVYLSNNTVKEVPTNNIRTILWNIYFLEIDSFFVSICKNYCISDEINNVSSNYSLSCFEKIQEWTYFVEKQEYKDFFEKKLYPYEIFDTITIRNSEERRLEQSIKRQISFLDQSKIYKYFRTNTNWFIFFQKQKPENILLKRWIILFFIRRLGYILQENTINWTLTFSEYQNELSAYFFLAYILQFPKKKNFVKINTKLFFLVHYFVRRVISFLNPLYLIILLLSKQNFCNSFGYPKSKSGWVTWTDTDIIQNFTRLQNNLFFFYSGCTNTKALARIHYILHFSCVKTLACKHKTNLRYIYKKFGTNLTRKDFTTKIFVTNQSKNFRLRSLWKNQKMTRVWNFRLTQLNSLIFHLETFYRLR.

This sequence belongs to the intron maturase 2 family. MatK subfamily.

It is found in the plastid. The protein localises to the chloroplast. In terms of biological role, usually encoded in the trnK tRNA gene intron. Probably assists in splicing its own and other chloroplast group II introns. This chain is Maturase K, found in Staurastrum punctulatum (Green alga).